A 138-amino-acid polypeptide reads, in one-letter code: uncharacterized protein (138 aa).

Residues 3 to 72 (LYSISKAAEK…LEDINEFVKD (70 aa)) enclose the HTH merR-type domain. Residues 6–25 (ISKAAEKTSISSYTLRYYEK) constitute a DNA-binding region (H-T-H motif).

This is an uncharacterized protein from Bacillus subtilis (strain 168).